The following is a 407-amino-acid chain: Guanine nucleotide-binding protein alpha-1 subunit (407 aa).

Residue Gly-2 is the site of N-myristoyl glycine attachment. Residue Cys-3 is the site of S-palmitoyl cysteine attachment. In terms of domain architecture, G-alpha spans 73–407 (NDIKVLLLGA…MSNNLQSLMF (335 aa)). The G1 motif stretch occupies residues 76-89 (KVLLLGAGDSGKTT). Asp-84, Ser-85, Gly-86, Lys-87, Thr-88, Thr-89, Asp-190, Leu-215, Thr-221, Gly-243, Asn-309, Lys-310, Asp-312, and Ala-380 together coordinate GTP. Thr-88 contributes to the Mg(2+) binding site. Positions 213-221 (DILHCRIKT) are G2 motif. Thr-221 contacts Mg(2+). The tract at residues 236 to 245 (YRFFDVGGQR) is G3 motif. The interval 305-312 (ILFLNKLD) is G4 motif. The tract at residues 378–383 (TTATDT) is G5 motif.

It belongs to the G-alpha family. G(q) subfamily. In terms of assembly, g proteins are composed of 3 units; alpha, beta and gamma. The alpha chain contains the guanine nucleotide binding site. Mg(2+) is required as a cofactor.

Functionally, implicated in the mating and sporulation pathway. Probably coupled to mating-factor receptors. May act in concert with Ras1. The chain is Guanine nucleotide-binding protein alpha-1 subunit (gpa1) from Schizosaccharomyces pombe (strain 972 / ATCC 24843) (Fission yeast).